Here is a 365-residue protein sequence, read N- to C-terminus: Succinyl-diaminopimelate desuccinylase (365 aa).

Residue histidine 64 participates in Zn(2+) binding. Aspartate 66 is a catalytic residue. Residue aspartate 95 participates in Zn(2+) binding. Glutamate 125 (proton acceptor) is an active-site residue. Zn(2+)-binding residues include glutamate 126, glutamate 154, and histidine 339.

This sequence belongs to the peptidase M20A family. DapE subfamily. In terms of assembly, homodimer. Zn(2+) serves as cofactor. Requires Co(2+) as cofactor.

It catalyses the reaction N-succinyl-(2S,6S)-2,6-diaminopimelate + H2O = (2S,6S)-2,6-diaminopimelate + succinate. It functions in the pathway amino-acid biosynthesis; L-lysine biosynthesis via DAP pathway; LL-2,6-diaminopimelate from (S)-tetrahydrodipicolinate (succinylase route): step 3/3. Functionally, catalyzes the hydrolysis of N-succinyl-L,L-diaminopimelic acid (SDAP), forming succinate and LL-2,6-diaminopimelate (DAP), an intermediate involved in the bacterial biosynthesis of lysine and meso-diaminopimelic acid, an essential component of bacterial cell walls. This is Succinyl-diaminopimelate desuccinylase from Sulfurimonas denitrificans (strain ATCC 33889 / DSM 1251) (Thiomicrospira denitrificans (strain ATCC 33889 / DSM 1251)).